The following is a 328-amino-acid chain: Fe(3+) ions import ATP-binding protein FbpC 1 (328 aa).

Residues 7–237 (LVLKNITKAF…PNSLFLANFM (231 aa)) enclose the ABC transporter domain. An ATP-binding site is contributed by 39-46 (GPSGCGKT).

Belongs to the ABC transporter superfamily. Fe(3+) ion importer (TC 3.A.1.10) family. As to quaternary structure, the complex is composed of two ATP-binding proteins (FbpC), two transmembrane proteins (FbpB) and a solute-binding protein (FbpA).

The protein localises to the cell inner membrane. The catalysed reaction is Fe(3+)(out) + ATP + H2O = Fe(3+)(in) + ADP + phosphate + H(+). Part of the ABC transporter complex FbpABC involved in Fe(3+) ions import. Responsible for energy coupling to the transport system. The protein is Fe(3+) ions import ATP-binding protein FbpC 1 of Haemophilus influenzae (strain ATCC 51907 / DSM 11121 / KW20 / Rd).